A 185-amino-acid chain; its full sequence is Peptidyl-tRNA hydrolase (185 aa).

A tRNA-binding site is contributed by Y14. Residue H19 is the Proton acceptor of the active site. The tRNA site is built by Y65, N67, and N113.

Belongs to the PTH family. As to quaternary structure, monomer.

The protein localises to the cytoplasm. The catalysed reaction is an N-acyl-L-alpha-aminoacyl-tRNA + H2O = an N-acyl-L-amino acid + a tRNA + H(+). Its function is as follows. Hydrolyzes ribosome-free peptidyl-tRNAs (with 1 or more amino acids incorporated), which drop off the ribosome during protein synthesis, or as a result of ribosome stalling. Catalyzes the release of premature peptidyl moieties from peptidyl-tRNA molecules trapped in stalled 50S ribosomal subunits, and thus maintains levels of free tRNAs and 50S ribosomes. The chain is Peptidyl-tRNA hydrolase from Rickettsia prowazekii (strain Madrid E).